The sequence spans 932 residues: Transcriptional regulatory protein DagR (932 aa).

One can recognise a Sigma-54 factor interaction domain in the interval 111-343 (LIGYDRSLRD…LKSDIQFLCA (233 aa)). ATP is bound by residues 141 to 148 (GPSGVGKT) and 210 to 219 (ADGGYLLLDE). Residues 462-567 (RYGDQIEERV…KECRHYRQRI (106 aa)) form the PRD 1 domain. His497 bears the Phosphohistidine mark. The region spanning 572–708 (DCGVILIAHG…PQQENGGKVL (137 aa)) is the PTS EIIA type-4 domain. His580 serves as the catalytic Tele-phosphohistidine intermediate. A PRD 2 domain is found at 835–932 (LNPQRILKEM…YFYIYELLYS (98 aa)). His870 carries the phosphohistidine modification.

Its function is as follows. Involved in the regulation of the catabolism of D-glucosaminate. The protein is Transcriptional regulatory protein DagR (dgaR) of Salmonella typhimurium (strain 14028s / SGSC 2262).